A 147-amino-acid polypeptide reads, in one-letter code: Cytochrome c oxidase subunit 3 (147 aa).

4 helical membrane passes run 13–33 (FQIP…VTWA), 48–68 (GLFI…YEYF), 83–103 (FFMA…FLLI), and 125–145 (AWYW…IYWW).

The protein belongs to the cytochrome c oxidase subunit 3 family. As to quaternary structure, component of the cytochrome c oxidase (complex IV, CIV), a multisubunit enzyme composed of a catalytic core of 3 subunits and several supernumerary subunits. The complex exists as a monomer or a dimer and forms supercomplexes (SCs) in the inner mitochondrial membrane with ubiquinol-cytochrome c oxidoreductase (cytochrome b-c1 complex, complex III, CIII).

Its subcellular location is the mitochondrion inner membrane. It catalyses the reaction 4 Fe(II)-[cytochrome c] + O2 + 8 H(+)(in) = 4 Fe(III)-[cytochrome c] + 2 H2O + 4 H(+)(out). In terms of biological role, component of the cytochrome c oxidase, the last enzyme in the mitochondrial electron transport chain which drives oxidative phosphorylation. The respiratory chain contains 3 multisubunit complexes succinate dehydrogenase (complex II, CII), ubiquinol-cytochrome c oxidoreductase (cytochrome b-c1 complex, complex III, CIII) and cytochrome c oxidase (complex IV, CIV), that cooperate to transfer electrons derived from NADH and succinate to molecular oxygen, creating an electrochemical gradient over the inner membrane that drives transmembrane transport and the ATP synthase. Cytochrome c oxidase is the component of the respiratory chain that catalyzes the reduction of oxygen to water. Electrons originating from reduced cytochrome c in the intermembrane space (IMS) are transferred via the dinuclear copper A center (CU(A)) of subunit 2 and heme A of subunit 1 to the active site in subunit 1, a binuclear center (BNC) formed by heme A3 and copper B (CU(B)). The BNC reduces molecular oxygen to 2 water molecules using 4 electrons from cytochrome c in the IMS and 4 protons from the mitochondrial matrix. The chain is Cytochrome c oxidase subunit 3 (COIII) from Spodoptera frugiperda (Fall armyworm).